The following is a 183-amino-acid chain: Protein jagunal homolog 1 (183 aa).

Over 1-39 (MASRAGPRAAGTDGSDFQHRERVAMHYQMSVTLKYEIKK) the chain is Cytoplasmic. S3 bears the Phosphoserine mark. The helical transmembrane segment at 40 to 60 (LIYVHLVIWLLLVAKMSVGHL) threads the bilayer. Residues 61 to 71 (RLLSHDQVAMP) lie on the Lumenal side of the membrane. Residues 72-92 (YQWEYPYLLSIVPSVLGLLSF) form a helical membrane-spanning segment. The Cytoplasmic portion of the chain corresponds to 93–96 (PRNN). The helical transmembrane segment at 97–117 (ISYLVLSMISMGLFSIAPLIY) threads the bilayer. Topologically, residues 118-137 (GSMEMFPAAQQLYRHGKAYR) are lumenal. Residues 138–158 (FLFGFSAVSVMYLVLVLAVQV) form a helical membrane-spanning segment. The Cytoplasmic portion of the chain corresponds to 159 to 183 (HAWQLYYSKKLLDSWFTSTQEKKRK).

The protein belongs to the jagunal family. In terms of assembly, interacts with COPA, COPB2 and COPG2.

The protein localises to the endoplasmic reticulum membrane. Functionally, endoplasmic reticulum transmembrane protein involved in vesicle-mediated transport, which is required for neutrophil function. Required for vesicle-mediated transport; it is however unclear whether it is involved in early secretory pathway or intracellular protein transport. Acts as a regulator of neutrophil function, probably via its role in vesicle-mediated transport: required for defense against fungal pathogens and for granulocyte colony-stimulating factor (GM-CSF) signaling pathway; possibly by regulating glycosylation and/or targeting of proteins contributing to the viability and migration of neutrophils. This is Protein jagunal homolog 1 from Mus musculus (Mouse).